Here is a 324-residue protein sequence, read N- to C-terminus: Fructose-1,6-bisphosphatase class 1 (324 aa).

E88, D107, L109, and D110 together coordinate Mg(2+). Residues 110–113 (DGSS), N199, and K265 each bind substrate. E271 is a binding site for Mg(2+).

It belongs to the FBPase class 1 family. Homotetramer. It depends on Mg(2+) as a cofactor.

The protein resides in the cytoplasm. The catalysed reaction is beta-D-fructose 1,6-bisphosphate + H2O = beta-D-fructose 6-phosphate + phosphate. It participates in carbohydrate biosynthesis; gluconeogenesis. The protein is Fructose-1,6-bisphosphatase class 1 of Neisseria meningitidis serogroup B (strain ATCC BAA-335 / MC58).